The chain runs to 550 residues: 65-kDa microtubule-associated protein 5 (550 aa).

Coiled-coil stretches lie at residues 46–174 (NKKV…QKVN) and 288–310 (IREAEDEVRRLNSLKSSKMKELV). The disordered stretch occupies residues 471-531 (QFREQKRLQG…PGRSVTSGGK (61 aa)). Residues 502-511 (QSLNTDNVTK) are compositionally biased toward polar residues.

Belongs to the MAP65/ASE1 family. In terms of assembly, forms a dimer. Binds to MT, mostly with coaligned MT, both between parallel or antiparallel, forming thick bundles. Bundles polymerized MT via the formation of 25-nm crossbridges with cortical MT.

The protein resides in the nucleus. Its subcellular location is the cytoplasm. It localises to the cytoskeleton. The protein localises to the spindle. It is found in the phragmoplast. The protein resides in the cell cortex. Its subcellular location is the cell junction. It localises to the plasmodesma. Its function is as follows. Microtubule-associated protein that bundle and stabilize adjacent microtubules (MT) of the cell cortex. Confers MT resistance to the drug oryzalin. Promotes the formation of a planar network of antiparallel microtubules. This is 65-kDa microtubule-associated protein 5 (MAP65-5) from Arabidopsis thaliana (Mouse-ear cress).